A 381-amino-acid polypeptide reads, in one-letter code: MTAQQKVNLLGLSRPQMEEFFLTMGEKKFRAQQVLKWIHHHQADSFEQMTDVGKALRQKLSEVAEIRGPKVTHESISRDGTRKWVFEMDNGGAVETVFIPDGRRGTLCVSSQVGCAVDCSFCSTGKQGFQRDMTSAEIIGQVWQASRAFGPRRNLGQHPITNVVMMGMGEPLLNYDKVLTAMRIMKDDLGYGIGKKRITVSTSGVIPKMNQLSEDLDVSLAVSLHAPNDELRNQLVPLNRKYPLKDLMAACKRYSKNITHRHNTITMEYVMLRDVNDKPEHARQLVKLLNGIPVKVNLIPFNPFPHAGYERSRKNDILEFHKYLNDNGVMTTVRTTRGDDIDAACGQLVGQVKDRTRRSERWKESIFHRTEQTDDNTAQTQ.

E95 serves as the catalytic Proton acceptor. Positions 101 to 339 (DGRRGTLCVS…MTTVRTTRGD (239 aa)) constitute a Radical SAM core domain. C108 and C345 are oxidised to a cystine. Residues C115, C119, and C122 each contribute to the [4Fe-4S] cluster site. S-adenosyl-L-methionine contacts are provided by residues 169–170 (GE), S201, 223–225 (SLH), and N302. The active-site S-methylcysteine intermediate is C345.

It belongs to the radical SAM superfamily. RlmN family. Requires [4Fe-4S] cluster as cofactor.

It is found in the cytoplasm. It catalyses the reaction adenosine(2503) in 23S rRNA + 2 reduced [2Fe-2S]-[ferredoxin] + 2 S-adenosyl-L-methionine = 2-methyladenosine(2503) in 23S rRNA + 5'-deoxyadenosine + L-methionine + 2 oxidized [2Fe-2S]-[ferredoxin] + S-adenosyl-L-homocysteine. It carries out the reaction adenosine(37) in tRNA + 2 reduced [2Fe-2S]-[ferredoxin] + 2 S-adenosyl-L-methionine = 2-methyladenosine(37) in tRNA + 5'-deoxyadenosine + L-methionine + 2 oxidized [2Fe-2S]-[ferredoxin] + S-adenosyl-L-homocysteine. Its function is as follows. Specifically methylates position 2 of adenine 2503 in 23S rRNA and position 2 of adenine 37 in tRNAs. m2A2503 modification seems to play a crucial role in the proofreading step occurring at the peptidyl transferase center and thus would serve to optimize ribosomal fidelity. The protein is Dual-specificity RNA methyltransferase RlmN of Alcanivorax borkumensis (strain ATCC 700651 / DSM 11573 / NCIMB 13689 / SK2).